The following is a 145-amino-acid chain: UPF0260 protein VC_1058 (145 aa).

It belongs to the UPF0260 family.

The protein is UPF0260 protein VC_1058 of Vibrio cholerae serotype O1 (strain ATCC 39315 / El Tor Inaba N16961).